We begin with the raw amino-acid sequence, 343 residues long: Glycerol-3-phosphate dehydrogenase [NAD(P)+] (343 aa).

NADPH is bound by residues Ser-15, Phe-16, Arg-36, and Lys-110. Sn-glycerol 3-phosphate contacts are provided by Lys-110 and Gly-138. Ala-142 lines the NADPH pocket. 5 residues coordinate sn-glycerol 3-phosphate: Lys-193, Asp-246, Ser-256, Arg-257, and Asn-258. The active-site Proton acceptor is Lys-193. Arg-257 is a binding site for NADPH. An NADPH-binding site is contributed by Glu-283.

This sequence belongs to the NAD-dependent glycerol-3-phosphate dehydrogenase family.

It localises to the cytoplasm. It catalyses the reaction sn-glycerol 3-phosphate + NAD(+) = dihydroxyacetone phosphate + NADH + H(+). The enzyme catalyses sn-glycerol 3-phosphate + NADP(+) = dihydroxyacetone phosphate + NADPH + H(+). It participates in membrane lipid metabolism; glycerophospholipid metabolism. Its function is as follows. Catalyzes the reduction of the glycolytic intermediate dihydroxyacetone phosphate (DHAP) to sn-glycerol 3-phosphate (G3P), the key precursor for phospholipid synthesis. The polypeptide is Glycerol-3-phosphate dehydrogenase [NAD(P)+] (Alcanivorax borkumensis (strain ATCC 700651 / DSM 11573 / NCIMB 13689 / SK2)).